The chain runs to 489 residues: Probable cytosol aminopeptidase (489 aa).

The Mn(2+) site is built by K260 and D265. The active site involves K272. 3 residues coordinate Mn(2+): D283, D342, and E344. The active site involves R346.

This sequence belongs to the peptidase M17 family. Requires Mn(2+) as cofactor.

It is found in the cytoplasm. The catalysed reaction is Release of an N-terminal amino acid, Xaa-|-Yaa-, in which Xaa is preferably Leu, but may be other amino acids including Pro although not Arg or Lys, and Yaa may be Pro. Amino acid amides and methyl esters are also readily hydrolyzed, but rates on arylamides are exceedingly low.. It carries out the reaction Release of an N-terminal amino acid, preferentially leucine, but not glutamic or aspartic acids.. In terms of biological role, presumably involved in the processing and regular turnover of intracellular proteins. Catalyzes the removal of unsubstituted N-terminal amino acids from various peptides. The sequence is that of Probable cytosol aminopeptidase from Alcanivorax borkumensis (strain ATCC 700651 / DSM 11573 / NCIMB 13689 / SK2).